The chain runs to 221 residues: Thyrotroph embryonic factor (221 aa).

The segment at 72–116 (ESASSSTASPPSSSTAVFQPSETVSSTESSLEKERETPSPIDPNC) is disordered. Over residues 73-100 (SASSSTASPPSSSTAVFQPSETVSSTES) the composition is skewed to low complexity. A bZIP domain is found at 173-221 (DEKYWTRRKKNNVAAKRSRDARRLKENQITIRAAFLEKENTALRTEVAD). Residues 175-195 (KYWTRRKKNNVAAKRSRDARR) form a basic motif region. A leucine-zipper region spans residues 196–203 (LKENQITI).

The protein belongs to the bZIP family. PAR subfamily. Binds DNA as a homodimer or a heterodimer. Can form a heterodimer with DBP.

It localises to the nucleus. Transcription factor that binds to and transactivates the TSHB promoter. Binds to a minimal DNA-binding sequence 5'-[TC][AG][AG]TTA[TC][AG]-3'. This Phodopus sungorus (Striped hairy-footed hamster) protein is Thyrotroph embryonic factor (TEF).